A 286-amino-acid chain; its full sequence is Shikimate dehydrogenase (NADP(+)) (286 aa).

Residues 22–24 (SRS) and Thr-71 contribute to the shikimate site. Lys-75 acts as the Proton acceptor in catalysis. Glu-87 is an NADP(+) binding site. Residues Asn-96 and Asp-111 each coordinate shikimate. NADP(+)-binding positions include 136-140 (GAGGA), 160-165 (NRTVER), and Ile-225. Tyr-227 is a binding site for shikimate. Position 248 (Gly-248) interacts with NADP(+).

This sequence belongs to the shikimate dehydrogenase family. Homodimer.

The enzyme catalyses shikimate + NADP(+) = 3-dehydroshikimate + NADPH + H(+). It participates in metabolic intermediate biosynthesis; chorismate biosynthesis; chorismate from D-erythrose 4-phosphate and phosphoenolpyruvate: step 4/7. Functionally, involved in the biosynthesis of the chorismate, which leads to the biosynthesis of aromatic amino acids. Catalyzes the reversible NADPH linked reduction of 3-dehydroshikimate (DHSA) to yield shikimate (SA). In Rhizobium rhizogenes (strain K84 / ATCC BAA-868) (Agrobacterium radiobacter), this protein is Shikimate dehydrogenase (NADP(+)).